Reading from the N-terminus, the 172-residue chain is Co-chaperone protein HscB homolog (172 aa).

Positions 2 to 69 (NHFELFNLPV…DSRAAYLLAL (68 aa)) constitute a J domain.

This sequence belongs to the HscB family. Interacts with HscA and stimulates its ATPase activity.

In terms of biological role, co-chaperone involved in the maturation of iron-sulfur cluster-containing proteins. Seems to help targeting proteins to be folded toward HscA. This is Co-chaperone protein HscB homolog from Acinetobacter baumannii (strain SDF).